The chain runs to 235 residues: Caffeoyl-CoA O-methyltransferase (235 aa).

Lys8 serves as a coordination point for substrate. Residues Val52, Glu74, 76–77, Ser82, Asp100, and Ala129 contribute to the S-adenosyl-L-methionine site; that span reads GV. Asp151 is a substrate binding site. Asp151 lines the a divalent metal cation pocket. An S-adenosyl-L-methionine-binding site is contributed by Asp153. A divalent metal cation contacts are provided by Asp177 and Asn178.

Belongs to the class I-like SAM-binding methyltransferase superfamily. Cation-dependent O-methyltransferase family. CCoAMT subfamily. The cofactor is a divalent metal cation.

The enzyme catalyses (E)-caffeoyl-CoA + S-adenosyl-L-methionine = (E)-feruloyl-CoA + S-adenosyl-L-homocysteine + H(+). Its pathway is aromatic compound metabolism; phenylpropanoid biosynthesis. Functionally, methylates caffeoyl-CoA to feruloyl-CoA and 5-hydroxyferuloyl-CoA to sinapoyl-CoA. Plays a role in the synthesis of feruloylated polysaccharides. Involved in the reinforcement of the plant cell wall. Also involved in the responding to wounding or pathogen challenge by the increased formation of cell wall-bound ferulic acid polymers. The chain is Caffeoyl-CoA O-methyltransferase from Populus kitakamiensis (Aspen).